We begin with the raw amino-acid sequence, 361 residues long: Histidinol-phosphate aminotransferase (361 aa).

Residue K219 is modified to N6-(pyridoxal phosphate)lysine.

Belongs to the class-II pyridoxal-phosphate-dependent aminotransferase family. Histidinol-phosphate aminotransferase subfamily. In terms of assembly, homodimer. Pyridoxal 5'-phosphate is required as a cofactor.

The enzyme catalyses L-histidinol phosphate + 2-oxoglutarate = 3-(imidazol-4-yl)-2-oxopropyl phosphate + L-glutamate. It participates in amino-acid biosynthesis; L-histidine biosynthesis; L-histidine from 5-phospho-alpha-D-ribose 1-diphosphate: step 7/9. This Acinetobacter baumannii (strain ATCC 17978 / DSM 105126 / CIP 53.77 / LMG 1025 / NCDC KC755 / 5377) protein is Histidinol-phosphate aminotransferase.